The following is a 574-amino-acid chain: Isocitrate dehydrogenase kinase/phosphatase (574 aa).

Residues 315–321 (APGIRGM) and lysine 336 contribute to the ATP site. Aspartate 371 is a catalytic residue.

It belongs to the AceK family.

Its subcellular location is the cytoplasm. The catalysed reaction is L-seryl-[isocitrate dehydrogenase] + ATP = O-phospho-L-seryl-[isocitrate dehydrogenase] + ADP + H(+). Bifunctional enzyme which can phosphorylate or dephosphorylate isocitrate dehydrogenase (IDH) on a specific serine residue. This is a regulatory mechanism which enables bacteria to bypass the Krebs cycle via the glyoxylate shunt in response to the source of carbon. When bacteria are grown on glucose, IDH is fully active and unphosphorylated, but when grown on acetate or ethanol, the activity of IDH declines drastically concomitant with its phosphorylation. In Escherichia coli O81 (strain ED1a), this protein is Isocitrate dehydrogenase kinase/phosphatase.